Reading from the N-terminus, the 252-residue chain is tRNA (guanine-N(7)-)-methyltransferase (252 aa).

S-adenosyl-L-methionine is bound by residues Glu-80, Glu-105, Asp-132, and Asp-155. The active site involves Asp-155. Substrate-binding positions include Lys-159, Asp-191, and 231 to 234; that span reads TKFE.

It belongs to the class I-like SAM-binding methyltransferase superfamily. TrmB family.

The enzyme catalyses guanosine(46) in tRNA + S-adenosyl-L-methionine = N(7)-methylguanosine(46) in tRNA + S-adenosyl-L-homocysteine. It functions in the pathway tRNA modification; N(7)-methylguanine-tRNA biosynthesis. In terms of biological role, catalyzes the formation of N(7)-methylguanine at position 46 (m7G46) in tRNA. The protein is tRNA (guanine-N(7)-)-methyltransferase of Actinobacillus succinogenes (strain ATCC 55618 / DSM 22257 / CCUG 43843 / 130Z).